The chain runs to 333 residues: Protein translocase subunit SecF (333 aa).

Helical transmembrane passes span 27–47 (AIVM…NFGI), 152–172 (VWTA…YIWV), 180–200 (LGAV…FAVL), 207–227 (TTVA…VVVF), 253–275 (TLSR…LIWG), and 285–307 (AMVW…IVLF).

Belongs to the SecD/SecF family. SecF subfamily. In terms of assembly, forms a complex with SecD. Part of the essential Sec protein translocation apparatus which comprises SecA, SecYEG and auxiliary proteins SecDF-YajC and YidC.

The protein resides in the cell inner membrane. Functionally, part of the Sec protein translocase complex. Interacts with the SecYEG preprotein conducting channel. SecDF uses the proton motive force (PMF) to complete protein translocation after the ATP-dependent function of SecA. The sequence is that of Protein translocase subunit SecF from Rhodobacter capsulatus (strain ATCC BAA-309 / NBRC 16581 / SB1003).